Consider the following 22-residue polypeptide: Chlorate reductase subunit gamma (22 aa).

The interval 1-22 (EXSEQNPNILEIKPGDTVKVXT) is disordered.

In terms of assembly, heterotrimer of alpha, beta and gamma subunits. Heme b serves as cofactor.

The protein resides in the cytoplasm. May transfer electrons to the iron-sulfur centers of the beta subunit of chlorate reductase. The sequence is that of Chlorate reductase subunit gamma from Stutzerimonas chloritidismutans (Pseudomonas chloritidismutans).